We begin with the raw amino-acid sequence, 3996 residues long: Probable E3 ubiquitin-protein ligase HECTD4 (3996 aa).

The helical transmembrane segment at 282 to 302 threads the bilayer; it reads TCIIRCILVVFQVVFKFFFSP. A compositionally biased stretch (polar residues) spans 1494 to 1510; sequence PTASEPDTTLTKTSPKN. Disordered regions lie at residues 1494 to 1524 and 1616 to 1637; these read PTAS…ESEA and PETV…SICR. Thr2080 carries the post-translational modification Phosphothreonine. Disordered stretches follow at residues 2219-2245, 2859-2919, 3017-3053, and 3327-3403; these read FITS…DDIP, TSAT…PTVL, EDTK…STSS, and FDKS…QEVP. The segment covering 2232–2245 has biased composition (acidic residues); sequence ADDESDDDDDDDIP. Positions 2866-2887 are enriched in low complexity; sequence LSDSSSSSSSSPGQTPQSPSLL. Residues 2888 to 2897 are compositionally biased toward basic residues; it reads SKRKKVKMKR. Composition is skewed to basic and acidic residues over residues 3017–3037, 3327–3341, and 3370–3403; these read EDTK…EPEK, FDKS…EQHP, and LSEK…QEVP. The region spanning 3627 to 3996 is the HECT domain; the sequence is SGGDPTYAFN…IHYREDPLSG (370 aa). The Glycyl thioester intermediate role is filled by Cys3964.

It localises to the membrane. The enzyme catalyses S-ubiquitinyl-[E2 ubiquitin-conjugating enzyme]-L-cysteine + [acceptor protein]-L-lysine = [E2 ubiquitin-conjugating enzyme]-L-cysteine + N(6)-ubiquitinyl-[acceptor protein]-L-lysine.. It participates in protein modification; protein ubiquitination. In terms of biological role, E3 ubiquitin-protein ligase which accepts ubiquitin from an E2 ubiquitin-conjugating enzyme in the form of a thioester and then directly transfers the ubiquitin to targeted substrates. The protein is Probable E3 ubiquitin-protein ligase HECTD4 (HECTD4) of Homo sapiens (Human).